Here is a 140-residue protein sequence, read N- to C-terminus: Cytochrome c oxidase subunit 6, mitochondrial (140 aa).

Belongs to the cytochrome c oxidase subunit 5A family. In terms of assembly, component of the cytochrome c oxidase (complex IV, CIV), a multisubunit enzyme composed of a catalytic core of 3 subunits and several supernumerary subunits. The complex exists as a monomer or a dimer and forms supercomplexes (SCs) in the inner mitochondrial membrane with ubiquinol-cytochrome c oxidoreductase (cytochrome b-c1 complex, complex III, CIII).

The protein resides in the mitochondrion inner membrane. It participates in energy metabolism; oxidative phosphorylation. Component of the cytochrome c oxidase, the last enzyme in the mitochondrial electron transport chain which drives oxidative phosphorylation. The respiratory chain contains 3 multisubunit complexes succinate dehydrogenase (complex II, CII), ubiquinol-cytochrome c oxidoreductase (cytochrome b-c1 complex, complex III, CIII) and cytochrome c oxidase (complex IV, CIV), that cooperate to transfer electrons derived from NADH and succinate to molecular oxygen, creating an electrochemical gradient over the inner membrane that drives transmembrane transport and the ATP synthase. Cytochrome c oxidase is the component of the respiratory chain that catalyzes the reduction of oxygen to water. Electrons originating from reduced cytochrome c in the intermembrane space (IMS) are transferred via the dinuclear copper A center (CU(A)) of subunit 2 and heme A of subunit 1 to the active site in subunit 1, a binuclear center (BNC) formed by heme A3 and copper B (CU(B)). The BNC reduces molecular oxygen to 2 water molecules using 4 electrons from cytochrome c in the IMS and 4 protons from the mitochondrial matrix. The sequence is that of Cytochrome c oxidase subunit 6, mitochondrial (cox6) from Schizosaccharomyces pombe (strain 972 / ATCC 24843) (Fission yeast).